The following is a 253-amino-acid chain: CD151 antigen (253 aa).

Residues Met1–Tyr18 are Cytoplasmic-facing. S-palmitoyl cysteine attachment occurs at residues Cys11 and Cys15. A helical transmembrane segment spans residues Leu19–Ile39. Topologically, residues Trp40–Tyr57 are extracellular. The helical transmembrane segment at Leu58–Gly78 threads the bilayer. Residues Cys79–Arg91 are Cytoplasmic-facing. Residues Leu92–Tyr112 form a helical membrane-spanning segment. Topologically, residues Val113–Arg221 are extracellular. Residue Asn159 is glycosylated (N-linked (GlcNAc...) asparagine). A helical transmembrane segment spans residues Val222–Cys242. S-palmitoyl cysteine attachment occurs at residues Cys242 and Cys243. Over Cys243–Tyr253 the chain is Cytoplasmic.

It belongs to the tetraspanin (TM4SF) family. In terms of assembly, interacts with integrins ITGA3:ITGB1, ITGA5:ITGB1, ITGA3:ITGB1 and ITGA6:ITGB4 and with CD9 and CD181. Interacts (via the second extracellular domain) with integrin ITGAV:ITGB3. Interacts with ITGA3; this interaction modulates ITGA3 glycosylation pattern. Interacts with F11R. Interacts with RAC1 and CDC42; these interactions mediate physical association of RAC1 and CDC42 with integrin adhesion receptor complexes. In terms of processing, palmitoylated. Palmitoylation by ZDHHC2 regulates CD151 expression, association with other tetraspanin family proteins and function in cell adhesion. Post-translationally, ubiquitinated by RNF128 on lysine residues present in the tetraspanin amino terminus via 'Lys-48'-linked ubiquitin leading to proteasomal degradation.

Its subcellular location is the cell membrane. Functionally, structural component of specialized membrane microdomains known as tetraspanin-enriched microdomains (TERMs), which act as platforms for receptor clustering and signaling. Plays a role in various cellular and molecular mechanism through its association with both integrin and non-integrin proteins. These interactions facilitate critical cellular functions, including cell-to-cell communication, wound healing, platelet aggregation, trafficking, cell motility, and angiogenesis. Via interaction with JAM-A/F11R and integrin ITGA3:ITGB1, promotes the recruitment of signaling molecules such as RAC1, CDC42 and RhoGTPases to facilitate the polarization of epithelial cells and the reorganization of the actin cytoskeleton, which are critical steps in cell migration process. Regulates the glycosylation pattern of ITGA3:ITGB1 thereby modulating its activity. Plays an essential role in the maintenance of central laminin-binding integrin ITGA6:ITGB4-containing adhesion complexes. Essential for the proper assembly of the glomerular and tubular basement membranes in kidney. Contributes to T-cell activation by modulating integrin signaling leading to activation of downstream targets PTK2 and MAPK1/MAPK3. The protein is CD151 antigen (Cd151) of Mus musculus (Mouse).